Here is a 359-residue protein sequence, read N- to C-terminus: Serpentine receptor class epsilon-13 (359 aa).

7 helical membrane-spanning segments follow: residues 33 to 53 (YLFVFYIQIALIFIVLFYYLL), 74 to 94 (AIYLPCVLGHVMCLIQKILLI), 111 to 131 (ISLFRAIFCFPGFYCLSAFVA), 150 to 170 (WLVGLILWIIYSIAFISALDF), 180 to 200 (VTIFILLSCLAYLSNYLNFLL), 237 to 257 (LALSIAFFQISGPMCLLIDNL), and 266 to 286 (LNTVVFDTILLLYAIVTPFVI).

The protein belongs to the nematode receptor-like protein sre family.

Its subcellular location is the membrane. The polypeptide is Serpentine receptor class epsilon-13 (sre-13) (Caenorhabditis elegans).